Reading from the N-terminus, the 328-residue chain is Cytochrome c biogenesis protein CcsA (328 aa).

The next 8 membrane-spanning stretches (helical) occupy residues 13–33, 46–66, 73–93, 101–121, 146–166, 234–254, 263–283, and 295–315; these read ISFS…LVNL, GIVI…IYSG, LYES…VSYF, LNAI…SGLL, MILG…LLVI, IISL…VWAN, WDPK…YLHI, and AIVA…VNLL.

Belongs to the CcmF/CycK/Ccl1/NrfE/CcsA family. May interact with Ccs1.

It localises to the plastid. The protein resides in the chloroplast thylakoid membrane. In terms of biological role, required during biogenesis of c-type cytochromes (cytochrome c6 and cytochrome f) at the step of heme attachment. This Nasturtium officinale (Watercress) protein is Cytochrome c biogenesis protein CcsA.